We begin with the raw amino-acid sequence, 374 residues long: Agmatine deiminase (374 aa).

Agmatine-binding residues include D220 and D226. C366 acts as the Amidino-cysteine intermediate in catalysis.

Belongs to the agmatine deiminase family. Forms homodimers.

The catalysed reaction is agmatine + H2O = N-carbamoylputrescine + NH4(+). Its pathway is amine and polyamine biosynthesis; putrescine biosynthesis via agmatine pathway; N-carbamoylputrescine from agmatine: step 1/1. Functionally, mediates the hydrolysis of agmatine into N-carbamoylputrescine in the arginine decarboxylase (ADC) pathway of putrescine biosynthesis, a basic polyamine. The protein is Agmatine deiminase of Medicago truncatula (Barrel medic).